The following is a 375-amino-acid chain: Alcohol dehydrogenase 1 (375 aa).

Ser-2 is subject to N-acetylserine. Positions 47, 68, 98, 101, 104, 112, and 175 each coordinate Zn(2+). NAD(+)-binding positions include 200 to 205, Asp-224, and Lys-229; that span reads GLGGVG. Position 234 is an N6-succinyllysine (Lys-234). 293–295 contacts NAD(+); the sequence is VGV. At Lys-340 the chain carries N6-succinyllysine. Arg-370 lines the NAD(+) pocket.

The protein belongs to the zinc-containing alcohol dehydrogenase family. Class-I subfamily. Requires Zn(2+) as cofactor.

It localises to the cytoplasm. The catalysed reaction is a primary alcohol + NAD(+) = an aldehyde + NADH + H(+). The enzyme catalyses a secondary alcohol + NAD(+) = a ketone + NADH + H(+). This chain is Alcohol dehydrogenase 1 (ADH1), found in Peromyscus maniculatus (North American deer mouse).